Consider the following 273-residue polypeptide: Large ribosomal subunit protein uL2 (273 aa).

Residues 221 to 263 (RGTAMNPVDHPHGGGEGRNFGKHPVTPWGVQTKGKKTRHNKRT) are disordered. A compositionally biased stretch (basic residues) spans 253–263 (KGKKTRHNKRT).

It belongs to the universal ribosomal protein uL2 family. In terms of assembly, part of the 50S ribosomal subunit. Forms a bridge to the 30S subunit in the 70S ribosome.

In terms of biological role, one of the primary rRNA binding proteins. Required for association of the 30S and 50S subunits to form the 70S ribosome, for tRNA binding and peptide bond formation. It has been suggested to have peptidyltransferase activity; this is somewhat controversial. Makes several contacts with the 16S rRNA in the 70S ribosome. The protein is Large ribosomal subunit protein uL2 of Histophilus somni (strain 2336) (Haemophilus somnus).